The primary structure comprises 160 residues: Cytochrome b6-f complex subunit 4 (160 aa).

Transmembrane regions (helical) follow at residues 36-56 (LLYM…GLAV), 95-115 (LLGV…PFIE), and 131-151 (TIFL…TLPI).

The protein belongs to the cytochrome b family. PetD subfamily. As to quaternary structure, the 4 large subunits of the cytochrome b6-f complex are cytochrome b6, subunit IV (17 kDa polypeptide, petD), cytochrome f and the Rieske protein, while the 4 small subunits are petG, petL, petM and petN. The complex functions as a dimer.

Its subcellular location is the plastid. The protein resides in the chloroplast thylakoid membrane. Component of the cytochrome b6-f complex, which mediates electron transfer between photosystem II (PSII) and photosystem I (PSI), cyclic electron flow around PSI, and state transitions. The polypeptide is Cytochrome b6-f complex subunit 4 (Staurastrum punctulatum (Green alga)).